The primary structure comprises 54 residues: Preprotein translocase subunit SecG (54 aa).

At M1–D31 the chain is on the cytoplasmic side. The chain crosses the membrane as a helical span at residues P32–V53. A54 is a topological domain (extracellular).

Belongs to the SEC61-beta family. In terms of assembly, component of the protein translocase complex. Heterotrimer consisting of alpha (SecY), beta (SecG) and gamma (SecE) subunits. Can form oligomers of the heterotrimer.

It localises to the cell membrane. Its function is as follows. Involved in protein export. The function of the beta subunit is unknown, but it may be involved in stabilization of the trimeric complex. This chain is Preprotein translocase subunit SecG, found in Halorubrum lacusprofundi (strain ATCC 49239 / DSM 5036 / JCM 8891 / ACAM 34).